Reading from the N-terminus, the 284-residue chain is UPF0354 protein SERP1303 (284 aa).

Belongs to the UPF0354 family.

This chain is UPF0354 protein SERP1303, found in Staphylococcus epidermidis (strain ATCC 35984 / DSM 28319 / BCRC 17069 / CCUG 31568 / BM 3577 / RP62A).